Here is an 811-residue protein sequence, read N- to C-terminus: Bifunctional enzyme MurC/Ddl (811 aa).

Positions 1–450 (MNRKNHYHFI…GNALKDFEPK (450 aa)) are UDP-N-acetylmuramate--alanine ligase. ATP-binding positions include 111–117 (GSHGKTT) and 607–662 (LETF…SREI). A D-alanine--D-alanine ligase region spans residues 451 to 811 (KLSVGVVCGG…NKQCLLTAKS (361 aa)). Residues 574 to 785 (KRLAASVGVP…FEQIVHQLII (212 aa)) enclose the ATP-grasp domain. 3 residues coordinate Mg(2+): D739, E752, and N754.

In the N-terminal section; belongs to the MurCDEF family. It in the C-terminal section; belongs to the D-alanine--D-alanine ligase family. The cofactor is Mg(2+). Requires Mn(2+) as cofactor.

It is found in the cytoplasm. The enzyme catalyses UDP-N-acetyl-alpha-D-muramate + L-alanine + ATP = UDP-N-acetyl-alpha-D-muramoyl-L-alanine + ADP + phosphate + H(+). It catalyses the reaction 2 D-alanine + ATP = D-alanyl-D-alanine + ADP + phosphate + H(+). The protein operates within cell wall biogenesis; peptidoglycan biosynthesis. This Chlamydia caviae (strain ATCC VR-813 / DSM 19441 / 03DC25 / GPIC) (Chlamydophila caviae) protein is Bifunctional enzyme MurC/Ddl (murC/ddlA).